The primary structure comprises 462 residues: Notoamide biosynthesis cluster protein O' (462 aa).

3 helical membrane-spanning segments follow: residues 16–36 (IFNVSVVAVCAFIAPGLWAAM), 55–75 (AVIFCLQVVVCVFGSSLIAKI), and 79–99 (WAFALGMVGFPIYASSVYCNV). Asparagine 102 carries N-linked (GlcNAc...) asparagine glycosylation. Helical transmembrane passes span 104–124 (SWYIMLACVIDGICSGIFWLT), 143–163 (AYWLASRIMGQMIGGAVTLGV), 173–193 (ISVQTYLVFISIQAIGPFVAA), and 233–253 (ILLLLPMMFQSVFSEAFFSTY). Asparagine 254 carries an N-linked (GlcNAc...) asparagine glycan. 4 helical membrane-spanning segments follow: residues 265-285 (LSSLVASTCVIISNFLLGFFL), 297-317 (MAAFIIIYAFELSLYVYAMVV), 343-363 (VYILMLVGFNLMYDYLYWLIG), and 404-424 (AVAVNLSFFAACIVPSAFVIY). The tract at residues 443-462 (LQTSGEGSHDIMDANGKSDD) is disordered. Residues 449 to 462 (GSHDIMDANGKSDD) show a composition bias toward basic and acidic residues.

This sequence belongs to the unc-93 family.

It localises to the membrane. In terms of biological role, part of the gene cluster that mediates the biosynthesis of notoamide, a fungal indole alkaloid that belongs to a family of natural products containing a characteristic bicyclo[2.2.2]diazaoctane core. The first step of notoamide biosynthesis involves coupling of L-proline and L-tryptophan by the bimodular NRPS notE', to produce cyclo-L-tryptophan-L-proline called brevianamide F. The reverse prenyltransferase notF' then acts as a deoxybrevianamide E synthase and converts brevianamide F to deoxybrevianamide E via reverse prenylation at C-2 of the indole ring leading to the bicyclo[2.2.2]diazaoctane core. Deoxybrevianamide E is further hydroxylated at C-6 of the indole ring, likely catalyzed by the cytochrome P450 monooxygenase notG', to yield 6-hydroxy-deoxybrevianamide E. 6-hydroxy-deoxybrevianamide E is a specific substrate of the prenyltransferase notC' for normal prenylation at C-7 to produce 6-hydroxy-7-prenyl-deoxybrevianamide, also called notoamide S. As the proposed pivotal branching point in notoamide biosynthesis, notoamide S can be diverted to notoamide E through an oxidative pyran ring closure putatively catalyzed by either notH' cytochrome P450 monooxygenase or the notD' FAD-linked oxidoreductase. This step would be followed by an indole 2,3-epoxidation-initiated pinacol-like rearrangement catalyzed by the notB' FAD-dependent monooxygenase leading to the formation of notoamide C and notoamide D. On the other hand notoamide S is converted to notoamide T by notH' (or notD'), a bifunctional oxidase that also functions as the intramolecular Diels-Alderase responsible for generation of (-)-notoamide T. To generate antipodal (+)-notoaminide T, notH (or notD) in Aspergillus strain MF297-2 is expected to catalyze a Diels-Alder reaction leading to the opposite stereochemistry. The remaining oxidoreductase notD' (or notH') likely catalyzes the oxidative pyran ring formation to yield (-)-stephacidin A. The FAD-dependent monooxygenase notI' is highly similar to notB' and is predicted to catalyze a similar conversion from (-)-stephacidin A to (+)-notoamide B via the 2,3-epoxidation of (-)-stephacidin A followed by a pinacol-type rearrangement. Finally, it remains unclear which enzyme could be responsible for the final hydroxylation steps leading to notoamide A and sclerotiamide. The function of notO' in the notoamide biosynthesis has not been determined yet. The chain is Notoamide biosynthesis cluster protein O' from Aspergillus versicolor.